A 556-amino-acid polypeptide reads, in one-letter code: Phenylalanine--tRNA ligase beta subunit (556 aa).

The B5 domain maps to 278 to 353 (LTPKEFEVEL…IAYGYNNIEP (76 aa)). Mg(2+) contacts are provided by Asp331, Asp337, Glu340, and Asp341.

It belongs to the phenylalanyl-tRNA synthetase beta subunit family. Type 2 subfamily. Tetramer of two alpha and two beta subunits. It depends on Mg(2+) as a cofactor.

Its subcellular location is the cytoplasm. The enzyme catalyses tRNA(Phe) + L-phenylalanine + ATP = L-phenylalanyl-tRNA(Phe) + AMP + diphosphate + H(+). This chain is Phenylalanine--tRNA ligase beta subunit, found in Pyrococcus horikoshii (strain ATCC 700860 / DSM 12428 / JCM 9974 / NBRC 100139 / OT-3).